The primary structure comprises 504 residues: L-amino-acid oxidase (504 aa).

A signal peptide spans 1–18 (MNIFFMFSLLFLATLGSC). A disulfide bridge connects residues Cys28 and Cys191. Residues 61–62 (MS), 81–82 (EA), Arg89, and 105–108 (GPMR) contribute to the FAD site. Arg108 contacts substrate. The N-linked (GlcNAc...) asparagine glycan is linked to Asn190. Position 241 (His241) interacts with substrate. Val279 serves as a coordination point for FAD. The cysteines at positions 349 and 430 are disulfide-linked. An N-linked (GlcNAc...) asparagine glycan is attached at Asn379. Residue Tyr390 coordinates substrate. FAD-binding positions include Glu475 and 482–487 (GWIDST). 482–483 (GW) lines the substrate pocket.

The protein belongs to the flavin monoamine oxidase family. FIG1 subfamily. Homodimer; non-covalently linked. It depends on FAD as a cofactor. Expressed by the venom gland.

It is found in the secreted. The catalysed reaction is an L-alpha-amino acid + O2 + H2O = a 2-oxocarboxylate + H2O2 + NH4(+). Functionally, catalyzes an oxidative deamination of predominantly hydrophobic and aromatic L-amino acids, thus producing hydrogen peroxide that may contribute to the diverse toxic effects of this enzyme. Exhibits diverse biological activities, such as hemorrhage, hemolysis, edema, apoptosis of vascular endothelial cells or tumor cell lines, antibacterial and antiparasitic activities, as well as regulation of platelet aggregation. Its effect on platelets is controversial, since it either induces aggregation or inhibits agonist-induced aggregation. These different effects are probably due to different experimental conditions. This Echis ocellatus (Ocellated saw-scaled viper) protein is L-amino-acid oxidase.